A 59-amino-acid polypeptide reads, in one-letter code: Conorfamide-Ep1 (59 aa).

A signal peptide spans 1-19 (MSGCGFLLLALLLLVTVEA). Positions 20–25 (TKMEKK) are excised as a propeptide. Isoleucine amide is present on I43. The propeptide occupies 45-59 (RRDMQSPLLSERLRF).

It belongs to the FARP (FMRFamide related peptide) family. In terms of tissue distribution, expressed by the venom duct.

Its subcellular location is the secreted. Functionally, neurotoxin that is active on vertebrates. When tested at high doses (10 uM), the toxin affects all zebrafish and mouse DRG neurons in culture, which could be an indication of an effect on a widely expressed receptor or ion channel found in both species. At low doses (1 uM), the effects of the toxin are confined to a specific subpopulation of zebrafish and mouse DRG neurons. In vivo, it induces long-lasting dramatic alterations in the locomotor behavior of zebrafish larvae. It rapidly induces hypoactivity and death of larvae at high doses and it causes hyperactivity at lower doses. In zebrafish adults, intramuscular injection causes the decrease of the movements and visited spaces. In mice, intracranial injection causes lethargy and prolonges sleeping phases and reduced movement. The polypeptide is Conorfamide-Ep1 (Conus episcopatus (Bishop's cone)).